We begin with the raw amino-acid sequence, 638 residues long: Growth hormone receptor (638 aa).

The first 18 residues, 1–18, serve as a signal peptide directing secretion; sequence MDLWQLLLTLALAGSSDA. Topologically, residues 19-264 are extracellular; it reads FSGSEPTAAI…NQFTCEEDFY (246 aa). The N-linked (GlcNAc...) asparagine glycan is linked to Asn-46. Disulfide bonds link Cys-56/Cys-66 and Cys-101/Cys-112. An N-linked (GlcNAc...) asparagine glycan is attached at Asn-115. Cys-126 and Cys-140 are disulfide-bonded. Residues 151-254 enclose the Fibronectin type-III domain; it reads PPIALNWTLL…EVLYVTLPQM (104 aa). Residues Asn-156, Asn-161, and Asn-200 are each glycosylated (N-linked (GlcNAc...) asparagine). The WSXWS motif signature appears at 240 to 244; it reads YGEFS. A helical membrane pass occupies residues 265–288; it reads FPWLLIIIFGIFGLTVMLFVFLFS. Residues 289–638 lie on the Cytoplasmic side of the membrane; that stretch reads KQQRIKMLIL…STDQLNKIMP (350 aa). The segment at 294–379 is required for JAK2 binding; that stretch reads KMLILPPVPV…HQKSHSNLGV (86 aa). The Box 1 motif motif lies at 297 to 305; sequence ILPPVPVPK. The short motif at 340–349 is the UbE motif element; that stretch reads DSWVEFIELD. Ser-341 carries the phosphoserine modification. Residues 353–388 are disordered; sequence PDEKNEGSDTDRLLSSDHQKSHSNLGVKDGDSGRTS. Positions 356–372 are enriched in basic and acidic residues; the sequence is KNEGSDTDRLLSSDHQK. 2 positions are modified to phosphotyrosine: Tyr-487 and Tyr-595.

It belongs to the type I cytokine receptor family. Type 1 subfamily. In terms of assembly, on growth hormone (GH) binding, forms homodimers and binds JAK2 via a box 1-containing domain. Post-translationally, the soluble form (GHBP) is produced by phorbol ester-promoted proteolytic cleavage at the cell surface (shedding) by ADAM17/TACE. Shedding is inhibited by growth hormone (GH) binding to the receptor probably due to a conformational change in GHR rendering the receptor inaccessible to ADAM17. On GH binding, phosphorylated on tyrosine residues in the cytoplasmic domain by JAK2. In terms of processing, ubiquitinated by the ECS(SOCS2) complex following ligand-binding and phosphorylation by JAK2, leading to its degradation by the proteasome. Regulation by the ECS(SOCS2) complex acts as a negative feedback loop of growth hormone receptor signaling. Ubiquitination is not sufficient for GHR internalization.

Its subcellular location is the cell membrane. It localises to the secreted. Receptor for pituitary gland growth hormone (GH1) involved in regulating postnatal body growth. On ligand binding, couples to the JAK2/STAT5 pathway. Its function is as follows. The soluble form (GHBP) acts as a reservoir of growth hormone in plasma and may be a modulator/inhibitor of GH signaling. This chain is Growth hormone receptor (GHR), found in Macaca mulatta (Rhesus macaque).